Reading from the N-terminus, the 216-residue chain is Deoxyribose-phosphate aldolase (216 aa).

Catalysis depends on aspartate 89, which acts as the Proton donor/acceptor. Lysine 153 serves as the catalytic Schiff-base intermediate with acetaldehyde. Lysine 182 serves as the catalytic Proton donor/acceptor.

It belongs to the DeoC/FbaB aldolase family. DeoC type 1 subfamily.

Its subcellular location is the cytoplasm. It carries out the reaction 2-deoxy-D-ribose 5-phosphate = D-glyceraldehyde 3-phosphate + acetaldehyde. It participates in carbohydrate degradation; 2-deoxy-D-ribose 1-phosphate degradation; D-glyceraldehyde 3-phosphate and acetaldehyde from 2-deoxy-alpha-D-ribose 1-phosphate: step 2/2. Its function is as follows. Catalyzes a reversible aldol reaction between acetaldehyde and D-glyceraldehyde 3-phosphate to generate 2-deoxy-D-ribose 5-phosphate. This chain is Deoxyribose-phosphate aldolase, found in Treponema denticola (strain ATCC 35405 / DSM 14222 / CIP 103919 / JCM 8153 / KCTC 15104).